Consider the following 301-residue polypeptide: G-protein coupled receptor homolog U51 (301 aa).

Over 1–15 (MEKETKSLAWPATAE) the chain is Extracellular. Residues 16–36 (FYGWVFIFSSIQLCTMVLLTV) form a helical membrane-spanning segment. Residues 37-48 (RFNSFKVGREYA) are Cytoplasmic-facing. Residues 49–69 (VFTFAGMSFNCFLLPIKMGLL) traverse the membrane as a helical segment. Residues 70–82 (SGHWSLPRDFCAI) are Extracellular-facing. The helical transmembrane segment at 83–103 (LLYIDDFSIYFSSWSLVFMAI) threads the bilayer. Residues 104 to 122 (ERINHFCYSTPLLNENSKA) lie on the Cytoplasmic side of the membrane. The helical transmembrane segment at 123 to 143 (LAKVCFPIVWIISGVQALQML) threads the bilayer. Residues 144-168 (NNYKATALQNETPQCFLAFLRSGYD) are Extracellular-facing. Residues 169–189 (MWLMLVYSVMIPVMLVFIYIY) traverse the membrane as a helical segment. The Cytoplasmic portion of the chain corresponds to 190-199 (SKNFMLLKDE). The chain crosses the membrane as a helical span at residues 200–220 (LSTVTTYLCIYLLLGTIAHLP). Residues 221–238 (KAGLSEIESDKIFYGLRD) are Extracellular-facing. The helical transmembrane segment at 239-259 (IFMALPVLKVYYIPVMAYCMA) threads the bilayer. At 260-301 (CDDHTVPVRLCSIWLVNLCKKCFSCTRREKESDLEVGIKMLK) the chain is on the cytoplasmic side.

Belongs to the G-protein coupled receptor 1 family.

It localises to the host cell membrane. The chain is G-protein coupled receptor homolog U51 (U51) from Homo sapiens (Human).